A 405-amino-acid polypeptide reads, in one-letter code: Tryptophan synthase beta chain (405 aa).

Lys98 carries the post-translational modification N6-(pyridoxal phosphate)lysine.

This sequence belongs to the TrpB family. As to quaternary structure, tetramer of two alpha and two beta chains. The cofactor is pyridoxal 5'-phosphate.

The enzyme catalyses (1S,2R)-1-C-(indol-3-yl)glycerol 3-phosphate + L-serine = D-glyceraldehyde 3-phosphate + L-tryptophan + H2O. It participates in amino-acid biosynthesis; L-tryptophan biosynthesis; L-tryptophan from chorismate: step 5/5. In terms of biological role, the beta subunit is responsible for the synthesis of L-tryptophan from indole and L-serine. The sequence is that of Tryptophan synthase beta chain from Stenotrophomonas maltophilia (strain K279a).